Here is a 102-residue protein sequence, read N- to C-terminus: Signal recognition particle 19 kDa protein (102 aa).

It belongs to the SRP19 family. As to quaternary structure, part of the signal recognition particle protein translocation system, which is composed of SRP and FtsY. Archaeal SRP consists of a 7S RNA molecule of 300 nucleotides and two protein subunits: SRP54 and SRP19.

Its subcellular location is the cytoplasm. Functionally, involved in targeting and insertion of nascent membrane proteins into the cytoplasmic membrane. Binds directly to 7S RNA and mediates binding of the 54 kDa subunit of the SRP. The polypeptide is Signal recognition particle 19 kDa protein (Saccharolobus solfataricus (strain ATCC 35092 / DSM 1617 / JCM 11322 / P2) (Sulfolobus solfataricus)).